We begin with the raw amino-acid sequence, 163 residues long: 2,3-dimethylmalate dehydratase small subunit (163 aa).

It belongs to the LeuD family. LeuD type 2 subfamily. In terms of assembly, heterodimer of a large and a small subunit.

It catalyses the reaction (2R,3S)-2,3-dimethylmalate = dimethylmaleate + H2O. Its pathway is cofactor degradation; nicotinate degradation; propanoate and pyruvate from 6-hydroxynicotinate: step 7/8. This is 2,3-dimethylmalate dehydratase small subunit from Eubacterium barkeri (Clostridium barkeri).